The chain runs to 619 residues: Dihydroxy-acid dehydratase (619 aa).

Residue D81 coordinates Mg(2+). C122 contacts [2Fe-2S] cluster. Mg(2+) is bound by residues D123 and K124. Position 124 is an N6-carboxylysine (K124). Position 195 (C195) interacts with [2Fe-2S] cluster. E494 serves as a coordination point for Mg(2+). S520 (proton acceptor) is an active-site residue.

Belongs to the IlvD/Edd family. As to quaternary structure, homodimer. The cofactor is [2Fe-2S] cluster. Mg(2+) is required as a cofactor.

It catalyses the reaction (2R)-2,3-dihydroxy-3-methylbutanoate = 3-methyl-2-oxobutanoate + H2O. It carries out the reaction (2R,3R)-2,3-dihydroxy-3-methylpentanoate = (S)-3-methyl-2-oxopentanoate + H2O. Its pathway is amino-acid biosynthesis; L-isoleucine biosynthesis; L-isoleucine from 2-oxobutanoate: step 3/4. It functions in the pathway amino-acid biosynthesis; L-valine biosynthesis; L-valine from pyruvate: step 3/4. Functionally, functions in the biosynthesis of branched-chain amino acids. Catalyzes the dehydration of (2R,3R)-2,3-dihydroxy-3-methylpentanoate (2,3-dihydroxy-3-methylvalerate) into 2-oxo-3-methylpentanoate (2-oxo-3-methylvalerate) and of (2R)-2,3-dihydroxy-3-methylbutanoate (2,3-dihydroxyisovalerate) into 2-oxo-3-methylbutanoate (2-oxoisovalerate), the penultimate precursor to L-isoleucine and L-valine, respectively. The chain is Dihydroxy-acid dehydratase from Shewanella frigidimarina (strain NCIMB 400).